We begin with the raw amino-acid sequence, 415 residues long: Queuine tRNA-ribosyltransferase accessory subunit 2 (415 aa).

4 residues coordinate Zn(2+): Cys351, Cys353, Cys356, and His382.

This sequence belongs to the queuine tRNA-ribosyltransferase family. QTRT2 subfamily. As to quaternary structure, heterodimer of a catalytic subunit QTRT1 and an accessory subunit QTRT2. Requires Zn(2+) as cofactor.

Its subcellular location is the cytoplasm. The protein resides in the mitochondrion outer membrane. In terms of biological role, non-catalytic subunit of the queuine tRNA-ribosyltransferase (TGT) that catalyzes the base-exchange of a guanine (G) residue with queuine (Q) at position 34 (anticodon wobble position) in tRNAs with GU(N) anticodons (tRNA-Asp, -Asn, -His and -Tyr), resulting in the hypermodified nucleoside queuosine (7-(((4,5-cis-dihydroxy-2-cyclopenten-1-yl)amino)methyl)-7-deazaguanosine). In Homo sapiens (Human), this protein is Queuine tRNA-ribosyltransferase accessory subunit 2.